The following is a 129-amino-acid chain: Small ribosomal subunit protein uS9 (129 aa).

It belongs to the universal ribosomal protein uS9 family.

This Nitratiruptor sp. (strain SB155-2) protein is Small ribosomal subunit protein uS9.